A 147-amino-acid polypeptide reads, in one-letter code: Diaminohydroxyphosphoribosylamino-pyrimidine deaminase (147 aa).

The 122-residue stretch at 1–122 (MKDRFYMTRA…LYLRKKGISV (122 aa)) folds into the CMP/dCMP-type deaminase domain. His-50 is a binding site for Zn(2+). Glu-52 serves as the catalytic Proton donor. Zn(2+) is bound by residues Cys-75 and Cys-84.

This sequence belongs to the cytidine and deoxycytidylate deaminase family. Zn(2+) serves as cofactor.

It catalyses the reaction 2,5-diamino-6-hydroxy-4-(5-phosphoribosylamino)-pyrimidine + H2O + H(+) = 5-amino-6-(5-phospho-D-ribosylamino)uracil + NH4(+). It functions in the pathway cofactor biosynthesis; riboflavin biosynthesis; 5-amino-6-(D-ribitylamino)uracil from GTP: step 2/4. This Buchnera aphidicola subsp. Schizaphis graminum (strain Sg) protein is Diaminohydroxyphosphoribosylamino-pyrimidine deaminase (ribD1).